We begin with the raw amino-acid sequence, 219 residues long: ATP phosphoribosyltransferase (219 aa).

This sequence belongs to the ATP phosphoribosyltransferase family. Short subfamily. In terms of assembly, heteromultimer composed of HisG and HisZ subunits.

The protein localises to the cytoplasm. It catalyses the reaction 1-(5-phospho-beta-D-ribosyl)-ATP + diphosphate = 5-phospho-alpha-D-ribose 1-diphosphate + ATP. It functions in the pathway amino-acid biosynthesis; L-histidine biosynthesis; L-histidine from 5-phospho-alpha-D-ribose 1-diphosphate: step 1/9. In terms of biological role, catalyzes the condensation of ATP and 5-phosphoribose 1-diphosphate to form N'-(5'-phosphoribosyl)-ATP (PR-ATP). Has a crucial role in the pathway because the rate of histidine biosynthesis seems to be controlled primarily by regulation of HisG enzymatic activity. In Clostridium kluyveri (strain NBRC 12016), this protein is ATP phosphoribosyltransferase.